Here is a 504-residue protein sequence, read N- to C-terminus: Occludin (504 aa).

Residues M1–R57 are Cytoplasmic-facing. One can recognise an MARVEL domain in the interval S51–S253. The chain crosses the membrane as a helical span at residues G58–W80. Topologically, residues D81–R123 are extracellular. A helical membrane pass occupies residues T124–L148. Residues S149 to R158 lie on the Cytoplasmic side of the membrane. The chain crosses the membrane as a helical span at residues F159–M183. The Extracellular segment spans residues G184 to E227. Residues C204 and C221 are joined by a disulfide bond. A helical membrane pass occupies residues A228–Q249. Residues K250 to G504 are Cytoplasmic-facing. The interval P324 to E396 is disordered. Basic residues predominate over residues P361–R370. 2 positions are modified to phosphotyrosine: Y379 and Y383. The interaction with TJP1 stretch occupies residues Y379–T385. The 109-residue stretch at E396–G504 folds into the OCEL domain. Residues Q412 to R471 adopt a coiled-coil conformation.

This sequence belongs to the ELL/occludin family. Interacts with TJP1 and TJP3. In terms of processing, phosphorylated. In terms of tissue distribution, localized at tight junctions of both epithelial and endothelial cells. Highly expressed in lung and liver. Expressed at a lower level in brain.

It localises to the cell membrane. The protein resides in the cell junction. Its subcellular location is the tight junction. In terms of biological role, may play a role in the formation and regulation of the tight junction (TJ) paracellular permeability barrier. Interacts with ZO-1. This chain is Occludin (OCLN), found in Gallus gallus (Chicken).